A 464-amino-acid polypeptide reads, in one-letter code: Glucose N-acetyltransferase 1 (464 aa).

The Cytoplasmic segment spans residues 1–14; that stretch reads MKLVLGNGLVNLSW. The helical; Signal-anchor for type II membrane protein transmembrane segment at 15–35 threads the bilayer; that stretch reads EYMLSFSILLYFIFTQLIFVF. Residues 36–464 lie on the Lumenal side of the membrane; sequence EDHSLAKNLK…QKLHNELWMV (429 aa). The DXD signature appears at 167-169; it reads DAD. Asn-180, Asn-186, Asn-248, and Asn-310 each carry an N-linked (GlcNAc...) asparagine glycan.

The protein belongs to the GNT1 family.

Its subcellular location is the golgi apparatus membrane. It is found in the vacuole membrane. Its function is as follows. N-acetylglucosaminyltransferase involved in the Golgi-specific modification of N-linked glycans. The polypeptide is Glucose N-acetyltransferase 1 (GNT1) (Debaryomyces hansenii (strain ATCC 36239 / CBS 767 / BCRC 21394 / JCM 1990 / NBRC 0083 / IGC 2968) (Yeast)).